We begin with the raw amino-acid sequence, 229 residues long: Flagellar L-ring protein (229 aa).

The N-terminal stretch at 1-25 (MKQVRLLPSAAVRAACALAAAALAG) is a signal peptide. The N-palmitoyl cysteine moiety is linked to residue Cys26. Cys26 is lipidated: S-diacylglycerol cysteine.

This sequence belongs to the FlgH family. The basal body constitutes a major portion of the flagellar organelle and consists of four rings (L,P,S, and M) mounted on a central rod.

It localises to the cell outer membrane. Its subcellular location is the bacterial flagellum basal body. Functionally, assembles around the rod to form the L-ring and probably protects the motor/basal body from shearing forces during rotation. The chain is Flagellar L-ring protein from Burkholderia multivorans (strain ATCC 17616 / 249).